The following is a 199-amino-acid chain: ATP-dependent Clp protease proteolytic subunit (199 aa).

The active-site Nucleophile is S102. H127 is an active-site residue.

Belongs to the peptidase S14 family. In terms of assembly, fourteen ClpP subunits assemble into 2 heptameric rings which stack back to back to give a disk-like structure with a central cavity, resembling the structure of eukaryotic proteasomes.

Its subcellular location is the cytoplasm. The catalysed reaction is Hydrolysis of proteins to small peptides in the presence of ATP and magnesium. alpha-casein is the usual test substrate. In the absence of ATP, only oligopeptides shorter than five residues are hydrolyzed (such as succinyl-Leu-Tyr-|-NHMec, and Leu-Tyr-Leu-|-Tyr-Trp, in which cleavage of the -Tyr-|-Leu- and -Tyr-|-Trp bonds also occurs).. Its function is as follows. Cleaves peptides in various proteins in a process that requires ATP hydrolysis. Has a chymotrypsin-like activity. Plays a major role in the degradation of misfolded proteins. The sequence is that of ATP-dependent Clp protease proteolytic subunit from Pseudothermotoga lettingae (strain ATCC BAA-301 / DSM 14385 / NBRC 107922 / TMO) (Thermotoga lettingae).